A 360-amino-acid chain; its full sequence is Photosystem II protein D1 (360 aa).

3 helical membrane-spanning segments follow: residues 29-46, 118-133, and 142-156; these read YIGW…SAIS, HFFI…EWEL, and WICV…AAAA. Residue His-118 coordinates chlorophyll a. Tyr-126 is a pheophytin a binding site. [CaMn4O5] cluster contacts are provided by Asp-170 and Glu-189. The chain crosses the membrane as a helical span at residues 197–218; sequence FHMLGVAGVFGGSLFSAMHGSL. Position 198 (His-198) interacts with chlorophyll a. Residues His-215 and 264–265 contribute to the a quinone site; that span reads SF. His-215 contacts Fe cation. His-272 provides a ligand contact to Fe cation. The helical transmembrane segment at 274 to 288 threads the bilayer; it reads FLGAWPVVGIWFTAM. [CaMn4O5] cluster-binding residues include His-332, Glu-333, Asp-342, and Ala-344. A propeptide spanning residues 345–360 is cleaved from the precursor; it reads AGESLPVALVAPAVAA.

Belongs to the reaction center PufL/M/PsbA/D family. As to quaternary structure, PSII is composed of 1 copy each of membrane proteins PsbA, PsbB, PsbC, PsbD, PsbE, PsbF, PsbH, PsbI, PsbJ, PsbK, PsbL, PsbM, PsbT, PsbX, PsbY, PsbZ, Psb30/Ycf12, at least 3 peripheral proteins of the oxygen-evolving complex and a large number of cofactors. It forms dimeric complexes. Requires The D1/D2 heterodimer binds P680, chlorophylls that are the primary electron donor of PSII, and subsequent electron acceptors. It shares a non-heme iron and each subunit binds pheophytin, quinone, additional chlorophylls, carotenoids and lipids. D1 provides most of the ligands for the Mn4-Ca-O5 cluster of the oxygen-evolving complex (OEC). There is also a Cl(-1) ion associated with D1 and D2, which is required for oxygen evolution. The PSII complex binds additional chlorophylls, carotenoids and specific lipids. as cofactor. In terms of processing, tyr-161 forms a radical intermediate that is referred to as redox-active TyrZ, YZ or Y-Z. C-terminally processed by CTPA; processing is essential to allow assembly of the oxygen-evolving complex and thus photosynthetic growth.

The protein localises to the plastid. Its subcellular location is the chloroplast thylakoid membrane. It catalyses the reaction 2 a plastoquinone + 4 hnu + 2 H2O = 2 a plastoquinol + O2. In terms of biological role, photosystem II (PSII) is a light-driven water:plastoquinone oxidoreductase that uses light energy to abstract electrons from H(2)O, generating O(2) and a proton gradient subsequently used for ATP formation. It consists of a core antenna complex that captures photons, and an electron transfer chain that converts photonic excitation into a charge separation. The D1/D2 (PsbA/PsbD) reaction center heterodimer binds P680, the primary electron donor of PSII as well as several subsequent electron acceptors. This chain is Photosystem II protein D1, found in Emiliania huxleyi (Coccolithophore).